A 1031-amino-acid chain; its full sequence is Semaphorin-6A (1031 aa).

A signal peptide spans 1 to 18; that stretch reads MRPAALLLCLTLLHCAGA. Residues 19–649 lie on the Extracellular side of the membrane; that stretch reads GFPEDSEPIS…KSNDQLVPVT (631 aa). Residues 24-512 enclose the Sema domain; that stretch reads SEPISISHGN…FSTCVIKVPL (489 aa). Asn-33, Asn-49, and Asn-65 each carry an N-linked (GlcNAc...) asparagine glycan. Disulfide bonds link Cys-107/Cys-117, Cys-135/Cys-144, Cys-258/Cys-369, and Cys-283/Cys-328. Asn-282 is a glycosylation site (N-linked (GlcNAc...) asparagine). 2 N-linked (GlcNAc...) asparagine glycosylation sites follow: Asn-434 and Asn-461. Intrachain disulfides connect Cys-477-Cys-506, Cys-515-Cys-533, Cys-521-Cys-568, and Cys-525-Cys-542. Residues 650–670 form a helical membrane-spanning segment; sequence LLAIAVILAFVMGAVFSGIIV. At 671-1031 the chain is on the cytoplasmic side; it reads YCVCDHRRKD…TSMKPNDACT (361 aa). Ser-698 is modified (phosphoserine). 3 disordered regions span residues 754 to 777, 861 to 902, and 914 to 1031; these read ALPT…SREW, SSKS…TGLS, and GLEY…DACT. Residues 921 to 931 are compositionally biased toward polar residues; that stretch reads YPTNSLTRSHQ. Residues 932 to 951 are compositionally biased toward low complexity; it reads TTTLKRNNTNSSNSSHLSRN. Phosphoserine is present on Ser-953. Polar residues-rich tracts occupy residues 971 to 998 and 1019 to 1031; these read QVHS…SLTR and PLST…DACT.

Belongs to the semaphorin family. As to quaternary structure, active as a homodimer or oligomer. The SEMA6A homodimer interacts with a PLXNA2 homodimer, giving rise to a heterotetramer. Interacts with EVL. In terms of tissue distribution, particularly high levels in spinal cord, cerebellum, metencephalon, superior and inferior colliculus, diencephalon, olfactory bulb and eye.

It is found in the cell membrane. Functionally, cell surface receptor for PLXNA2 that plays an important role in cell-cell signaling. Required for normal granule cell migration in the developing cerebellum. Promotes reorganization of the actin cytoskeleton and plays an important role in axon guidance in the developing central nervous system. Can act as repulsive axon guidance cue. Has repulsive action towards migrating granular neurons. May play a role in channeling sympathetic axons into the sympathetic chains and controlling the temporal sequence of sympathetic target innervation. The sequence is that of Semaphorin-6A (Sema6a) from Mus musculus (Mouse).